The following is a 156-amino-acid chain: Protein LlR18B (156 aa).

Positions 8 and 28 each coordinate trans-zeatin. Pro32 and Ile38 together coordinate Ca(2+). Trans-zeatin is bound by residues Lys54, Glu133, and Lys136.

Belongs to the BetVI family. As to expression, ubiquitous, with higher levels in roots.

Its subcellular location is the cytoplasm. The protein localises to the cytosol. Class II ribonuclease (RNase), with low activity on single-strand RNA. Binds to cytokinins. Interacts with melatonin. In Lupinus luteus (European yellow lupine), this protein is Protein LlR18B (LLR18B).